Consider the following 243-residue polypeptide: Carboxy-S-adenosyl-L-methionine synthase (243 aa).

Residues Tyr-40, 65-67 (GCS), 90-91 (DN), 118-119 (DI), Asn-133, and Arg-200 each bind S-adenosyl-L-methionine.

The protein belongs to the class I-like SAM-binding methyltransferase superfamily. Cx-SAM synthase family. In terms of assembly, homodimer.

It catalyses the reaction prephenate + S-adenosyl-L-methionine = carboxy-S-adenosyl-L-methionine + 3-phenylpyruvate + H2O. Catalyzes the conversion of S-adenosyl-L-methionine (SAM) to carboxy-S-adenosyl-L-methionine (Cx-SAM). In Shewanella loihica (strain ATCC BAA-1088 / PV-4), this protein is Carboxy-S-adenosyl-L-methionine synthase.